The chain runs to 144 residues: Large ribosomal subunit protein uL15 (144 aa).

A disordered region spans residues 1-57 (MELNNIKPADGAKKDKRRVGRGIGSGLGKTAGRGHKGQKSRAGGFHKVGFEGGQMPM). Residues 21–31 (RGIGSGLGKTA) are compositionally biased toward gly residues.

The protein belongs to the universal ribosomal protein uL15 family. In terms of assembly, part of the 50S ribosomal subunit.

Functionally, binds to the 23S rRNA. In Thiobacillus denitrificans (strain ATCC 25259 / T1), this protein is Large ribosomal subunit protein uL15.